We begin with the raw amino-acid sequence, 114 residues long: Ferritin-like protein (114 aa).

Residues Glu29, Glu59, and His62 each coordinate Fe cation. The tract at residues 86–114 is cargo-loading peptide; sequence FTDKPITEIEEETSGGSENTGGDLGIRKL. The interval 94–114 is disordered; it reads IEEETSGGSENTGGDLGIRKL. Residues 103–114 show a composition bias toward gly residues; it reads ENTGGDLGIRKL.

It belongs to the ferritin-like superfamily. Probably forms a decamer which binds to the pentameric axis of the interior of the protein shell; as the Flp cargo protein is flexible, packing into the shell is not rigid. 3, 4 or 5 cargo decamers bind inside the encapulin nanocompartment. Fe cation serves as cofactor.

It localises to the encapsulin nanocompartment. Its function is as follows. Cargo protein of a type 1 encapsulin nanocompartment. A ferritin-like protein that probably stores iron in the encapsulin nanocompartment. The sequence is that of Ferritin-like protein from Thermotoga maritima (strain ATCC 43589 / DSM 3109 / JCM 10099 / NBRC 100826 / MSB8).